Consider the following 280-residue polypeptide: MARARASGGLTIVNAIGHGRLGGAAGLGLWVESRVREARGLWAGVSLTPRGERRLPPRVLEAAATAACSLGACVEGLEAEVHTGFPPGVGLKGSAALLASLVEAVLRLKGVRAPPWRAALAAARVSRGAGLSVTGALDDHAASLLEAPVITDNRGMAILRLLPRDGCRLTAVIGVPGVENPVENLDPSPFRRHSRLYDAAARLGLAGEWLPAMAVSGVAGALALGVEGLASRLYEAGAAAAGVTGKGPAVFALTERPRGAAEVLETAGYEVVEARFKWCG.

ATP is bound at residue 86-96 (PPGVGLKGSAA).

The protein belongs to the GHMP kinase family. Archaeal shikimate kinase subfamily.

The protein resides in the cytoplasm. It carries out the reaction shikimate + ATP = 3-phosphoshikimate + ADP + H(+). It functions in the pathway metabolic intermediate biosynthesis; chorismate biosynthesis; chorismate from D-erythrose 4-phosphate and phosphoenolpyruvate: step 5/7. This chain is Shikimate kinase (aroK), found in Aeropyrum pernix (strain ATCC 700893 / DSM 11879 / JCM 9820 / NBRC 100138 / K1).